Here is a 35-residue protein sequence, read N- to C-terminus: Photosystem II reaction center protein T (35 aa).

A helical membrane pass occupies residues 3–23 (ALVYTFLLVSTLGIIFFAIFF).

The protein belongs to the PsbT family. In terms of assembly, PSII is composed of 1 copy each of membrane proteins PsbA, PsbB, PsbC, PsbD, PsbE, PsbF, PsbH, PsbI, PsbJ, PsbK, PsbL, PsbM, PsbT, PsbY, PsbZ, Psb30/Ycf12, at least 3 peripheral proteins of the oxygen-evolving complex and a large number of cofactors. It forms dimeric complexes.

Its subcellular location is the plastid. The protein localises to the chloroplast thylakoid membrane. Functionally, found at the monomer-monomer interface of the photosystem II (PS II) dimer, plays a role in assembly and dimerization of PSII. PSII is a light-driven water plastoquinone oxidoreductase, using light energy to abstract electrons from H(2)O, generating a proton gradient subsequently used for ATP formation. This chain is Photosystem II reaction center protein T, found in Cedrus deodara (Deodar cedar).